The following is a 212-amino-acid chain: Glycerol-3-phosphate acyltransferase (212 aa).

5 helical membrane passes run Ala5–Cys25, Val53–Ala73, Pro80–Phe100, Phe112–Leu132, and Gly138–Phe158.

Belongs to the PlsY family. In terms of assembly, probably interacts with PlsX.

It localises to the cell inner membrane. It carries out the reaction an acyl phosphate + sn-glycerol 3-phosphate = a 1-acyl-sn-glycero-3-phosphate + phosphate. The protein operates within lipid metabolism; phospholipid metabolism. Functionally, catalyzes the transfer of an acyl group from acyl-phosphate (acyl-PO(4)) to glycerol-3-phosphate (G3P) to form lysophosphatidic acid (LPA). This enzyme utilizes acyl-phosphate as fatty acyl donor, but not acyl-CoA or acyl-ACP. The protein is Glycerol-3-phosphate acyltransferase of Serratia proteamaculans (strain 568).